Reading from the N-terminus, the 227-residue chain is 7-cyano-7-deazaguanine synthase (227 aa).

Residue 16 to 26 participates in ATP binding; sequence FSGGQDSTTCL. The Zn(2+) site is built by cysteine 194, cysteine 202, cysteine 205, and cysteine 208.

It belongs to the QueC family. It depends on Zn(2+) as a cofactor.

The catalysed reaction is 7-carboxy-7-deazaguanine + NH4(+) + ATP = 7-cyano-7-deazaguanine + ADP + phosphate + H2O + H(+). It participates in purine metabolism; 7-cyano-7-deazaguanine biosynthesis. Its function is as follows. Catalyzes the ATP-dependent conversion of 7-carboxy-7-deazaguanine (CDG) to 7-cyano-7-deazaguanine (preQ(0)). In Haemophilus influenzae (strain PittEE), this protein is 7-cyano-7-deazaguanine synthase.